Consider the following 724-residue polypeptide: Probable dipeptidyl-peptidase 5 (724 aa).

The N-terminal stretch at 1–19 (MGALTWLSVVAAAASTALA) is a signal peptide. N-linked (GlcNAc...) asparagine glycosylation is found at Asn-76, Asn-97, Asn-154, Asn-257, Asn-383, and Asn-453. Ser-563 functions as the Charge relay system in the catalytic mechanism. A glycan (N-linked (GlcNAc...) asparagine) is linked at Asn-610. Active-site charge relay system residues include Asp-646 and His-678.

Belongs to the peptidase S9C family.

The protein localises to the secreted. In terms of biological role, extracellular dipeptidyl-peptidase which removes N-terminal dipeptides sequentially from polypeptides having unsubstituted N-termini. This chain is Probable dipeptidyl-peptidase 5 (dpp5), found in Aspergillus clavatus (strain ATCC 1007 / CBS 513.65 / DSM 816 / NCTC 3887 / NRRL 1 / QM 1276 / 107).